Consider the following 461-residue polypeptide: Photosystem II CP43 reaction center protein (461 aa).

Residues M1–E2 constitute a propeptide that is removed on maturation. An N-acetylthreonine modification is found at T3. At T3 the chain carries Phosphothreonine. The next 5 membrane-spanning stretches (helical) occupy residues L57 to A81, L122 to N143, K166 to T188, T243 to S263, and W279 to S300. A [CaMn4O5] cluster-binding site is contributed by E355. A helical membrane pass occupies residues R435–P459.

Belongs to the PsbB/PsbC family. PsbC subfamily. As to quaternary structure, PSII is composed of 1 copy each of membrane proteins PsbA, PsbB, PsbC, PsbD, PsbE, PsbF, PsbH, PsbI, PsbJ, PsbK, PsbL, PsbM, PsbT, PsbX, PsbY, PsbZ, Psb30/Ycf12, at least 3 peripheral proteins of the oxygen-evolving complex and a large number of cofactors. It forms dimeric complexes. Binds multiple chlorophylls and provides some of the ligands for the Ca-4Mn-5O cluster of the oxygen-evolving complex. It may also provide a ligand for a Cl- that is required for oxygen evolution. PSII binds additional chlorophylls, carotenoids and specific lipids. serves as cofactor. In terms of processing, phosphorylated in vitro.

Its subcellular location is the plastid. It localises to the chloroplast thylakoid membrane. Functionally, one of the components of the core complex of photosystem II (PSII). It binds chlorophyll and helps catalyze the primary light-induced photochemical processes of PSII. PSII is a light-driven water:plastoquinone oxidoreductase, using light energy to abstract electrons from H(2)O, generating O(2) and a proton gradient subsequently used for ATP formation. This is Photosystem II CP43 reaction center protein from Chlamydomonas reinhardtii (Chlamydomonas smithii).